Here is a 132-residue protein sequence, read N- to C-terminus: Large ribosomal subunit protein bL21 (132 aa).

A disordered region spans residues 112-132 (AEKPARKPRAKKTNEVTTDGA).

The protein belongs to the bacterial ribosomal protein bL21 family. Part of the 50S ribosomal subunit. Contacts protein L20.

Its function is as follows. This protein binds to 23S rRNA in the presence of protein L20. The sequence is that of Large ribosomal subunit protein bL21 from Dehalococcoides mccartyi (strain ATCC BAA-2266 / KCTC 15142 / 195) (Dehalococcoides ethenogenes (strain 195)).